The following is a 1142-amino-acid chain: Desmoglein-2.1 (1142 aa).

A signal peptide spans 1-18 (MARRISPVVAFLLCFGLS). Residues 19-38 (HFFEAEARLQHSVALHRQKR) constitute a propeptide that is removed on maturation. Residues 39 to 643 (EWIVPPQILE…AKKGSRLGPA (605 aa)) lie on the Extracellular side of the membrane. Cadherin domains lie at 64–148 (SDKE…APVF), 156–258 (VDEL…VPTL), 259–416 (GGPY…GPKF), and 417–527 (FPGT…CPTL). N115 is a glycosylation site (N-linked (GlcNAc...) asparagine). The segment at 369 to 389 (SGAAGGAGAMGGASGSGGGTG) is disordered. N490 and N576 each carry an N-linked (GlcNAc...) asparagine glycan. A helical transmembrane segment spans residues 644–664 (GIGLLLLALLALLLIPLLLLL). At 665-1142 (CTCGMTGAFT…RKVVTTQSVK (478 aa)) the chain is on the cytoplasmic side. 4 Desmoglein repeat repeats span residues 948–974 (VEQQ…NSGP), 975–998 (VAEG…ERMV), 999–1039 (LVFR…VLQG), and 1040–1071 (TIQR…NGIS).

Its subcellular location is the cell junction. It localises to the desmosome. The protein resides in the cell membrane. The protein localises to the cytoplasm. In terms of biological role, a component of desmosome cell-cell junctions which are required for positive regulation of cellular adhesion. Involved in the interaction of plaque proteins and intermediate filaments mediating cell-cell adhesion. Required for embryogenesis, specifically for progression of epiboly and normal convergence-extension movements during gastrulation. The protein is Desmoglein-2.1 of Danio rerio (Zebrafish).